The sequence spans 172 residues: 3-hydroxydecanoyl-[acyl-carrier-protein] dehydratase (172 aa).

His-71 is an active-site residue.

It belongs to the thioester dehydratase family. FabA subfamily. In terms of assembly, homodimer.

The protein resides in the cytoplasm. The catalysed reaction is a (3R)-hydroxyacyl-[ACP] = a (2E)-enoyl-[ACP] + H2O. The enzyme catalyses (3R)-hydroxydecanoyl-[ACP] = (2E)-decenoyl-[ACP] + H2O. It carries out the reaction (2E)-decenoyl-[ACP] = (3Z)-decenoyl-[ACP]. Its pathway is lipid metabolism; fatty acid biosynthesis. In terms of biological role, necessary for the introduction of cis unsaturation into fatty acids. Catalyzes the dehydration of (3R)-3-hydroxydecanoyl-ACP to E-(2)-decenoyl-ACP and then its isomerization to Z-(3)-decenoyl-ACP. Can catalyze the dehydratase reaction for beta-hydroxyacyl-ACPs with saturated chain lengths up to 16:0, being most active on intermediate chain length. The chain is 3-hydroxydecanoyl-[acyl-carrier-protein] dehydratase from Vibrio vulnificus (strain CMCP6).